The following is a 201-amino-acid chain: ATP-dependent Clp protease proteolytic subunit 2 (201 aa).

S98 serves as the catalytic Nucleophile. H123 is a catalytic residue.

This sequence belongs to the peptidase S14 family. In terms of assembly, fourteen ClpP subunits assemble into 2 heptameric rings which stack back to back to give a disk-like structure with a central cavity, resembling the structure of eukaryotic proteasomes.

The protein resides in the cytoplasm. It catalyses the reaction Hydrolysis of proteins to small peptides in the presence of ATP and magnesium. alpha-casein is the usual test substrate. In the absence of ATP, only oligopeptides shorter than five residues are hydrolyzed (such as succinyl-Leu-Tyr-|-NHMec, and Leu-Tyr-Leu-|-Tyr-Trp, in which cleavage of the -Tyr-|-Leu- and -Tyr-|-Trp bonds also occurs).. Functionally, cleaves peptides in various proteins in a process that requires ATP hydrolysis. Has a chymotrypsin-like activity. Plays a major role in the degradation of misfolded proteins. This Rhizobium johnstonii (strain DSM 114642 / LMG 32736 / 3841) (Rhizobium leguminosarum bv. viciae) protein is ATP-dependent Clp protease proteolytic subunit 2.